The sequence spans 436 residues: Hydrogenobyrinate a,c-diamide synthase (436 aa).

The GATase cobBQ-type domain maps to 244–435 (RIAVARDDAF…MHVIDFSGEA (192 aa)). The active-site Nucleophile is the Cys327.

This sequence belongs to the CobB/CbiA family. Requires Mg(2+) as cofactor.

The catalysed reaction is hydrogenobyrinate + 2 L-glutamine + 2 ATP + 2 H2O = hydrogenobyrinate a,c-diamide + 2 L-glutamate + 2 ADP + 2 phosphate + 2 H(+). The protein operates within cofactor biosynthesis; adenosylcobalamin biosynthesis; cob(II)yrinate a,c-diamide from precorrin-2 (aerobic route): step 9/10. Its function is as follows. Catalyzes the ATP-dependent amidation of the two carboxylate groups at positions a and c of hydrogenobyrinate, using either L-glutamine or ammonia as the nitrogen source. In Brucella suis biovar 1 (strain 1330), this protein is Hydrogenobyrinate a,c-diamide synthase.